Here is a 596-residue protein sequence, read N- to C-terminus: UvrABC system protein C (596 aa).

Residues Ser16–Val95 enclose the GIY-YIG domain. In terms of domain architecture, UVR spans Ser209–Leu244.

The protein belongs to the UvrC family. In terms of assembly, interacts with UvrB in an incision complex.

Its subcellular location is the cytoplasm. Its function is as follows. The UvrABC repair system catalyzes the recognition and processing of DNA lesions. UvrC both incises the 5' and 3' sides of the lesion. The N-terminal half is responsible for the 3' incision and the C-terminal half is responsible for the 5' incision. The polypeptide is UvrABC system protein C (Cytophaga hutchinsonii (strain ATCC 33406 / DSM 1761 / CIP 103989 / NBRC 15051 / NCIMB 9469 / D465)).